We begin with the raw amino-acid sequence, 802 residues long: Post-transcriptional regulator mkt1 (802 aa).

Residues Ser-227, Ser-228, and Ser-230 each carry the phosphoserine modification.

It belongs to the XPG/RAD2 endonuclease family. Interacts with pab1 binding protein ath1.

Functionally, involved in post-transcriptional regulation of gene expression by 3'-UTR-mediated RNA regulation. Promotes interactions between mRNA and poly(A)-binding protein. Binds the 3' UTR of mRNAs, centromeric transcripts and antisense-rDNA. Required for the establishment but not the maintenance of heterochromatin at pericentromeres, and for the maintenance of small domains of facultative heterochromatin known as HOODs. This is Post-transcriptional regulator mkt1 from Schizosaccharomyces pombe (strain 972 / ATCC 24843) (Fission yeast).